Reading from the N-terminus, the 494-residue chain is 4-trimethylaminobutyraldehyde dehydrogenase (494 aa).

Serine 2 bears the N-acetylserine mark. Lysine 30 is modified (N6-acetyllysine; alternate). Lysine 30 is subject to N6-succinyllysine; alternate. At lysine 59 the chain carries N6-succinyllysine. NAD(+) is bound by residues lysine 180 and 232–236 (GSVPT). Glutamate 254 functions as the Proton acceptor in the catalytic mechanism. Cysteine 288 functions as the Nucleophile in the catalytic mechanism. Lysine 298 carries the post-translational modification N6-acetyllysine. Position 391 (glutamate 391) interacts with NAD(+).

It belongs to the aldehyde dehydrogenase family. In terms of assembly, homotetramer. As to expression, detected in lever (at protein level).

It is found in the cytoplasm. It localises to the cytosol. It catalyses the reaction 4-(trimethylamino)butanal + NAD(+) + H2O = 4-(trimethylamino)butanoate + NADH + 2 H(+). The enzyme catalyses an aldehyde + NAD(+) + H2O = a carboxylate + NADH + 2 H(+). The catalysed reaction is 4-aminobutanal + NAD(+) + H2O = 4-aminobutanoate + NADH + 2 H(+). It carries out the reaction formaldehyde + NAD(+) + H2O = formate + NADH + 2 H(+). It catalyses the reaction acetaldehyde + NAD(+) + H2O = acetate + NADH + 2 H(+). The enzyme catalyses imidazole-4-acetaldehyde + NAD(+) + H2O = imidazole-4-acetate + NADH + 2 H(+). The catalysed reaction is acrolein + NAD(+) + H2O = acrylate + NADH + 2 H(+). It carries out the reaction (5-hydroxyindol-3-yl)acetaldehyde + NAD(+) + H2O = (5-hydroxyindol-3-yl)acetate + NADH + 2 H(+). It catalyses the reaction 3,4-dihydroxyphenylacetaldehyde + NAD(+) + H2O = 3,4-dihydroxyphenylacetate + NADH + 2 H(+). The enzyme catalyses spermine monoaldehyde + NAD(+) + H2O = N-(2-carboxyethyl)spermidine + NADH + 2 H(+). The catalysed reaction is propanal + NAD(+) + H2O = propanoate + NADH + 2 H(+). It carries out the reaction butanal + NAD(+) + H2O = butanoate + NADH + 2 H(+). It catalyses the reaction pentanal + NAD(+) + H2O = pentanoate + NADH + 2 H(+). The enzyme catalyses hexanal + NAD(+) + H2O = hexanoate + NADH + 2 H(+). Its pathway is amine and polyamine biosynthesis; carnitine biosynthesis. In terms of biological role, converts gamma-trimethylaminobutyraldehyde into gamma-butyrobetaine with high efficiency (in vitro). Can catalyze the irreversible oxidation of a broad range of aldehydes to the corresponding acids in an NAD-dependent reaction, but with low efficiency. Catalyzes the oxidation of aldehydes arising from biogenic amines and polyamines. The chain is 4-trimethylaminobutyraldehyde dehydrogenase (Aldh9a1) from Rattus norvegicus (Rat).